The primary structure comprises 289 residues: D-alanine aminotransferase (289 aa).

A substrate-binding site is contributed by tyrosine 31. Arginine 50 is a pyridoxal 5'-phosphate binding site. Arginine 99 and histidine 101 together coordinate substrate. Lysine 147 carries the post-translational modification N6-(pyridoxal phosphate)lysine. Residue glutamate 179 coordinates pyridoxal 5'-phosphate.

The protein belongs to the class-IV pyridoxal-phosphate-dependent aminotransferase family. As to quaternary structure, homodimer. Requires pyridoxal 5'-phosphate as cofactor.

The enzyme catalyses D-alanine + 2-oxoglutarate = D-glutamate + pyruvate. In terms of biological role, acts on the D-isomers of alanine, leucine, aspartate, glutamate, aminobutyrate, norvaline and asparagine. The enzyme transfers an amino group from a substrate D-amino acid to the pyridoxal phosphate cofactor to form pyridoxamine and an alpha-keto acid in the first half-reaction. The second half-reaction is the reverse of the first, transferring the amino group from the pyridoxamine to a second alpha-keto acid to form the product D-amino acid via a ping-pong mechanism. This is an important process in the formation of D-alanine and D-glutamate, which are essential bacterial cell wall components. The protein is D-alanine aminotransferase (dat) of Listeria monocytogenes serovar 1/2a (strain ATCC BAA-679 / EGD-e).